An 815-amino-acid chain; its full sequence is Ferripyoverdine receptor (815 aa).

An N-terminal signal peptide occupies residues 1 to 43 (MPAPHGLSPLSKAFLMRRAFQRRILPHSLAMALSLPLAGYVQA). One can recognise a TBDR plug domain in the interval 161–271 (TPRETPQSIT…LGATINLIRK (111 aa)). Positions 276-815 (EFKGHVELGA…NLMFSTRWDF (540 aa)) constitute a TBDR beta-barrel domain. The TonB C-terminal box signature appears at 798 to 815 (SASYGDPRNLMFSTRWDF).

This sequence belongs to the TonB-dependent receptor family.

Its subcellular location is the cell outer membrane. In terms of biological role, receptor for the siderophore ferripyoverdine. This is Ferripyoverdine receptor (fpvA) from Pseudomonas aeruginosa (strain ATCC 15692 / DSM 22644 / CIP 104116 / JCM 14847 / LMG 12228 / 1C / PRS 101 / PAO1).